The sequence spans 268 residues: Tryptophan synthase alpha chain (268 aa).

Active-site proton acceptor residues include E49 and D60.

It belongs to the TrpA family. As to quaternary structure, tetramer of two alpha and two beta chains.

The catalysed reaction is (1S,2R)-1-C-(indol-3-yl)glycerol 3-phosphate + L-serine = D-glyceraldehyde 3-phosphate + L-tryptophan + H2O. Its pathway is amino-acid biosynthesis; L-tryptophan biosynthesis; L-tryptophan from chorismate: step 5/5. In terms of biological role, the alpha subunit is responsible for the aldol cleavage of indoleglycerol phosphate to indole and glyceraldehyde 3-phosphate. The protein is Tryptophan synthase alpha chain of Vibrio cholerae serotype O1 (strain ATCC 39541 / Classical Ogawa 395 / O395).